Here is a 322-residue protein sequence, read N- to C-terminus: Malate dehydrogenase (322 aa).

Residues 10-15 and Asp34 each bind NAD(+); that span reads GSGQIG. Substrate is bound by residues Arg83 and Arg89. NAD(+) contacts are provided by residues Asn96 and 119–121; that span reads ITN. Residues Asn121 and Arg152 each contribute to the substrate site. His176 functions as the Proton acceptor in the catalytic mechanism.

The protein belongs to the LDH/MDH superfamily. MDH type 3 family.

It carries out the reaction (S)-malate + NAD(+) = oxaloacetate + NADH + H(+). In terms of biological role, catalyzes the reversible oxidation of malate to oxaloacetate. The polypeptide is Malate dehydrogenase (Bradyrhizobium diazoefficiens (strain JCM 10833 / BCRC 13528 / IAM 13628 / NBRC 14792 / USDA 110)).